The sequence spans 462 residues: tRNA modification GTPase MnmE (462 aa).

Residues Arg22, Glu87, and Arg126 each contribute to the (6S)-5-formyl-5,6,7,8-tetrahydrofolate site. Positions 220–382 (GLKVAIVGRP…LARKVQEIVL (163 aa)) constitute a TrmE-type G domain. Position 230 (Asn230) interacts with K(+). GTP contacts are provided by residues 230 to 235 (NVGKSS), 249 to 255 (SNIPGTT), and 274 to 277 (DTAG). Ser234 lines the Mg(2+) pocket. Ser249, Ile251, and Thr254 together coordinate K(+). Position 255 (Thr255) interacts with Mg(2+). Lys462 contacts (6S)-5-formyl-5,6,7,8-tetrahydrofolate.

Belongs to the TRAFAC class TrmE-Era-EngA-EngB-Septin-like GTPase superfamily. TrmE GTPase family. Homodimer. Heterotetramer of two MnmE and two MnmG subunits. It depends on K(+) as a cofactor.

The protein resides in the cytoplasm. In terms of biological role, exhibits a very high intrinsic GTPase hydrolysis rate. Involved in the addition of a carboxymethylaminomethyl (cmnm) group at the wobble position (U34) of certain tRNAs, forming tRNA-cmnm(5)s(2)U34. In Moorella thermoacetica (strain ATCC 39073 / JCM 9320), this protein is tRNA modification GTPase MnmE.